Reading from the N-terminus, the 372-residue chain is Glutamate 5-kinase (372 aa).

Lysine 14 provides a ligand contact to ATP. Substrate-binding residues include serine 54, aspartate 141, and asparagine 153. Residue 173 to 174 participates in ATP binding; sequence TD. The region spanning 280–358 is the PUA domain; it reads RGHVVIDAGA…GEIETVLGYM (79 aa).

This sequence belongs to the glutamate 5-kinase family.

It is found in the cytoplasm. It carries out the reaction L-glutamate + ATP = L-glutamyl 5-phosphate + ADP. It functions in the pathway amino-acid biosynthesis; L-proline biosynthesis; L-glutamate 5-semialdehyde from L-glutamate: step 1/2. Catalyzes the transfer of a phosphate group to glutamate to form L-glutamate 5-phosphate. In Burkholderia ambifaria (strain ATCC BAA-244 / DSM 16087 / CCUG 44356 / LMG 19182 / AMMD) (Burkholderia cepacia (strain AMMD)), this protein is Glutamate 5-kinase.